The sequence spans 162 residues: MEKVFERLMYASRWIMAPIYLGLSLILFALGIKFFQEIFHIIPNIFSIKEVDLVLITLSLIDITLVGGLLIMVMFSGYENFVSQLDVGENSEKLNWLGKMDAGSLKNKVAASIVAISSIHLLKVFMNAENIANDKIMWYLLIHITFVLSAFAMGYLDKITRK.

A run of 3 helical transmembrane segments spans residues 15–35, 53–73, and 136–156; these read IMAP…IKFF, LVLI…LIMV, and IMWY…MGYL.

It belongs to the UPF0114 family.

The protein resides in the cell membrane. The polypeptide is UPF0114 protein Sfri_3655 (Shewanella frigidimarina (strain NCIMB 400)).